A 266-amino-acid polypeptide reads, in one-letter code: N-formylglutamate deformylase (266 aa).

Belongs to the N-formylglutamate deformylase family. In terms of assembly, monomer.

It carries out the reaction N-formyl-L-glutamate + H2O = formate + L-glutamate. Its pathway is amino-acid degradation; L-histidine degradation into L-glutamate; L-glutamate from N-formimidoyl-L-glutamate (deiminase route): step 2/2. Catalyzes the hydrolysis of N-formyl-L-glutamate to formate and L-glutamate. Shows weak activity with N-formyl-L-glutamine. In Pseudomonas aeruginosa (strain ATCC 15692 / DSM 22644 / CIP 104116 / JCM 14847 / LMG 12228 / 1C / PRS 101 / PAO1), this protein is N-formylglutamate deformylase.